A 466-amino-acid polypeptide reads, in one-letter code: Bifunctional NAD(P)H-hydrate repair enzyme Nnr (466 aa).

The NAD(P)H-hydrate epimerase stretch occupies residues 1-207; it reads MLSVYEKVNA…HLGVFNQIYE (207 aa). The YjeF N-terminal domain maps to 8–207; that stretch reads VNALDKRAIE…HLGVFNQIYE (200 aa). The tract at residues 56–60 is NADPHX 1; for epimerase activity; that stretch reads DNGGD. K(+) is bound by residues asparagine 57 and aspartate 120. The interval 124-130 is NADPHX 1; for epimerase activity; the sequence is GSHFKGK. Aspartate 151 lines the (6S)-NADPHX pocket. Serine 154 contacts K(+). A YjeF C-terminal domain is found at 215 to 466; the sequence is LEKSDLKLPL…LDLIEKIKQL (252 aa). An ADP-dependent (S)-NAD(P)H-hydrate dehydratase region spans residues 215 to 466; sequence LEKSDLKLPL…LDLIEKIKQL (252 aa). Residue glycine 300 participates in (6S)-NADPHX binding. The interval 342 to 348 is NADPHX 2; for dehydratase activity; that stretch reads HPKEFLS. Residues 385 to 389 and 404 to 413 contribute to the ADP site; these read KGANT and SVALAKAGSG. Aspartate 414 contacts (6S)-NADPHX.

This sequence in the N-terminal section; belongs to the NnrE/AIBP family. The protein in the C-terminal section; belongs to the NnrD/CARKD family. It depends on K(+) as a cofactor.

The catalysed reaction is (6S)-NADHX + ADP = AMP + phosphate + NADH + H(+). The enzyme catalyses (6S)-NADPHX + ADP = AMP + phosphate + NADPH + H(+). It carries out the reaction (6R)-NADHX = (6S)-NADHX. It catalyses the reaction (6R)-NADPHX = (6S)-NADPHX. Bifunctional enzyme that catalyzes the epimerization of the S- and R-forms of NAD(P)HX and the dehydration of the S-form of NAD(P)HX at the expense of ADP, which is converted to AMP. This allows the repair of both epimers of NAD(P)HX, a damaged form of NAD(P)H that is a result of enzymatic or heat-dependent hydration. The sequence is that of Bifunctional NAD(P)H-hydrate repair enzyme Nnr (nnr) from Helicobacter pylori (strain ATCC 700392 / 26695) (Campylobacter pylori).